The sequence spans 1728 residues: Nebulin-related-anchoring protein (1728 aa).

One can recognise an LIM zinc-binding domain in the interval 4-64 (QACSRCGYGV…HAHNPKNNTF (61 aa)). Nebulin repeat units lie at residues 173 to 200 (TPAY…ERVS), 201 to 235 (TFTP…QQRG), 244 to 271 (TPAY…REMK), 313 to 340 (TPAY…KMKG), 345 to 379 (HSLA…NSKG), 386 to 414 (ETPQ…TQLR), 416 to 450 (HYDG…HDVV), 484 to 518 (KFSS…RNKL), 519 to 553 (NYTL…KTKG), 555 to 589 (GFEM…KMKG), 599 to 623 (LLHS…ESKT), 624 to 658 (HFNL…DYTV), 659 to 689 (LPED…WMRG), 699 to 721 (NLEQ…RVDE), 723 to 757 (KFTS…QSVH), 758 to 792 (QYTI…KQKA), 794 to 828 (GFEL…RSRG), 841 to 866 (QMSH…DTRS), 867 to 893 (QCHI…VGYR), 898 to 932 (CFTA…WMKG), 943 to 960 (VEQA…KYRQ), 966 to 1000 (KFTS…NVKH), 1001 to 1035 (HYTQ…RLRD), 1037 to 1071 (GYKL…RMKG), 1075 to 1109 (GSRS…HAKA), 1110 to 1136 (HFHL…QDYR), 1141 to 1175 (QHTV…FMRG), 1180 to 1203 (VPGT…KYRQ), 1209 to 1243 (KYTA…DARH), 1244 to 1278 (QYTM…NLRA), 1280 to 1314 (GYKL…KERG), 1318 to 1352 (GVRN…SSQA), 1353 to 1379 (QCHL…HDYR), 1384 to 1418 (EFTA…GMKG), 1425 to 1446 (QSPQ…KYRK), 1452 to 1478 (KFTT…RLYR), 1487 to 1521 (RYTP…QSRA), 1523 to 1557 (GYDF…RDRG), 1561 to 1595 (GYRS…KGRS), 1596 to 1630 (QFHS…QHTS), and 1637 to 1661 (LKHA…LTRG). Thr203 bears the Phosphothreonine mark. The residue at position 1078 (Ser1078) is a Phosphoserine.

As to quaternary structure, interacts with actin, alpha-actinin, KLHL41, TLN1 and VCL. Interacts with CSRP3. As to expression, expressed in cardiac and skeletal muscle. Not detected in kidney, spleen, liver, brain, lung, stomach or uterus.

May be involved in anchoring the terminal actin filaments in the myofibril to the membrane and in transmitting tension from the myofibrils to the extracellular matrix. This is Nebulin-related-anchoring protein from Mus musculus (Mouse).